Reading from the N-terminus, the 376-residue chain is Riboflavin biosynthesis protein RibD (376 aa).

Residues 1–150 (MEDFSEQQLF…QPYLYQRTHN (150 aa)) are deaminase. The region spanning 6-128 (EQQLFFMRRA…MLRQAGIQVY (123 aa)) is the CMP/dCMP-type deaminase domain. His-55 lines the Zn(2+) pocket. Glu-57 serves as the catalytic Proton donor. 2 residues coordinate Zn(2+): Cys-80 and Cys-89. The tract at residues 151-376 (FPWTILKSAA…SPQVFEPIRN (226 aa)) is reductase. Position 159 (Ala-159) interacts with NADP(+). Ser-173 contributes to the substrate binding site. Residue Trp-175 coordinates NADP(+). Arg-189 contacts substrate. The NADP(+) site is built by Thr-201 and Asp-205. Residues Leu-209 and Arg-212 each coordinate substrate. Ser-230 is an NADP(+) binding site. Residue Glu-300 participates in substrate binding. 302 to 308 (GTTLHTS) lines the NADP(+) pocket.

The protein in the N-terminal section; belongs to the cytidine and deoxycytidylate deaminase family. In the C-terminal section; belongs to the HTP reductase family. Zn(2+) serves as cofactor.

It carries out the reaction 2,5-diamino-6-hydroxy-4-(5-phosphoribosylamino)-pyrimidine + H2O + H(+) = 5-amino-6-(5-phospho-D-ribosylamino)uracil + NH4(+). The catalysed reaction is 5-amino-6-(5-phospho-D-ribitylamino)uracil + NADP(+) = 5-amino-6-(5-phospho-D-ribosylamino)uracil + NADPH + H(+). The protein operates within cofactor biosynthesis; riboflavin biosynthesis; 5-amino-6-(D-ribitylamino)uracil from GTP: step 2/4. It participates in cofactor biosynthesis; riboflavin biosynthesis; 5-amino-6-(D-ribitylamino)uracil from GTP: step 3/4. In terms of biological role, converts 2,5-diamino-6-(ribosylamino)-4(3h)-pyrimidinone 5'-phosphate into 5-amino-6-(ribosylamino)-2,4(1h,3h)-pyrimidinedione 5'-phosphate. This chain is Riboflavin biosynthesis protein RibD (ribD), found in Chlamydia pneumoniae (Chlamydophila pneumoniae).